Reading from the N-terminus, the 248-residue chain is Triosephosphate isomerase (248 aa).

9–11 (NWK) is a binding site for substrate. His94 acts as the Electrophile in catalysis. Glu164 serves as the catalytic Proton acceptor. Residues Gly170, Ser209, and 230 to 231 (GG) contribute to the substrate site.

It belongs to the triosephosphate isomerase family. As to quaternary structure, homodimer.

The protein localises to the cytoplasm. It carries out the reaction D-glyceraldehyde 3-phosphate = dihydroxyacetone phosphate. The protein operates within carbohydrate biosynthesis; gluconeogenesis. It participates in carbohydrate degradation; glycolysis; D-glyceraldehyde 3-phosphate from glycerone phosphate: step 1/1. In terms of biological role, involved in the gluconeogenesis. Catalyzes stereospecifically the conversion of dihydroxyacetone phosphate (DHAP) to D-glyceraldehyde-3-phosphate (G3P). The protein is Triosephosphate isomerase of Hahella chejuensis (strain KCTC 2396).